Here is a 589-residue protein sequence, read N- to C-terminus: UvrABC system protein C (589 aa).

The region spanning 14 to 91 (HKPGCYLWKD…IAKYKPKYNM (78 aa)) is the GIY-YIG domain.

It belongs to the UvrC family. Interacts with UvrB in an incision complex.

The protein localises to the cytoplasm. In terms of biological role, the UvrABC repair system catalyzes the recognition and processing of DNA lesions. UvrC both incises the 5' and 3' sides of the lesion. The N-terminal half is responsible for the 3' incision and the C-terminal half is responsible for the 5' incision. In Malacoplasma penetrans (strain HF-2) (Mycoplasma penetrans), this protein is UvrABC system protein C.